Reading from the N-terminus, the 872-residue chain is Eukaryotic translation initiation factor 3 subunit C (872 aa).

The segment at 1–100 (MSRFFRGGDD…KVKSAKDKRF (100 aa)) is disordered. Acidic residues-rich tracts occupy residues 16–59 (SSEE…DEEE) and 72–87 (SDDE…SDDE). Residues 88–100 (ATTKVKSAKDKRF) are compositionally biased toward basic and acidic residues. Residues 613–787 (FHMHINLELL…ETVIFRKGVE (175 aa)) form the PCI domain. The segment at 812–872 (TLEQKTQGSA…GGALGNAVRG (61 aa)) is disordered. Positions 831–848 (GGGQRGGGQRGGRGGART) are enriched in gly residues.

This sequence belongs to the eIF-3 subunit C family. Component of the eukaryotic translation initiation factor 3 (eIF-3) complex.

It localises to the cytoplasm. Functionally, component of the eukaryotic translation initiation factor 3 (eIF-3) complex, which is involved in protein synthesis of a specialized repertoire of mRNAs and, together with other initiation factors, stimulates binding of mRNA and methionyl-tRNAi to the 40S ribosome. The eIF-3 complex specifically targets and initiates translation of a subset of mRNAs involved in cell proliferation. The chain is Eukaryotic translation initiation factor 3 subunit C (nip-1) from Neurospora crassa (strain ATCC 24698 / 74-OR23-1A / CBS 708.71 / DSM 1257 / FGSC 987).